The sequence spans 159 residues: NADH-quinone oxidoreductase subunit I (159 aa).

4Fe-4S ferredoxin-type domains follow at residues 51–80 (RRYE…IEAE) and 90–119 (TRYD…EGPN). Residues C60, C63, C66, C70, C99, C102, C105, and C109 each coordinate [4Fe-4S] cluster.

It belongs to the complex I 23 kDa subunit family. NDH-1 is composed of 14 different subunits. Subunits NuoA, H, J, K, L, M, N constitute the membrane sector of the complex. Requires [4Fe-4S] cluster as cofactor.

Its subcellular location is the cell inner membrane. The catalysed reaction is a quinone + NADH + 5 H(+)(in) = a quinol + NAD(+) + 4 H(+)(out). Its function is as follows. NDH-1 shuttles electrons from NADH, via FMN and iron-sulfur (Fe-S) centers, to quinones in the respiratory chain. The immediate electron acceptor for the enzyme in this species is believed to be ubiquinone. Couples the redox reaction to proton translocation (for every two electrons transferred, four hydrogen ions are translocated across the cytoplasmic membrane), and thus conserves the redox energy in a proton gradient. In Rickettsia canadensis (strain McKiel), this protein is NADH-quinone oxidoreductase subunit I.